The chain runs to 280 residues: Gastrula zinc finger protein XlCGF46.1 (280 aa).

10 consecutive C2H2-type zinc fingers follow at residues 6 to 28, 34 to 56, 62 to 84, 90 to 112, 118 to 140, 146 to 168, 174 to 196, 202 to 224, 230 to 252, and 258 to 280; these read FACK…KLMH, FECT…QLIH, FVCP…LLCH, FTCK…KLTH, FICS…QLIH, YVCT…LRTH, FKCE…KVTH, FTCE…QLTH, FKCE…QRFH, and YKCN…ELSH.

It belongs to the krueppel C2H2-type zinc-finger protein family.

It localises to the nucleus. Functionally, may be involved in transcriptional regulation. The protein is Gastrula zinc finger protein XlCGF46.1 of Xenopus laevis (African clawed frog).